The chain runs to 500 residues: Cytochrome P450 81F1 (500 aa).

Residues methionine 1–serine 21 form a helical membrane-spanning segment. Residue lysine 248 forms a Glycyl lysine isopeptide (Lys-Gly) (interchain with G-Cter in ubiquitin) linkage. A heme-binding site is contributed by cysteine 438.

Belongs to the cytochrome P450 family. It depends on heme as a cofactor.

The protein resides in the membrane. It participates in secondary metabolite biosynthesis. Functionally, involved in indole glucosinolate biosynthesis. Catalyzes hydroxylation reactions of the glucosinolate indole ring. Converts indol-3-yl-methylglucosinolate (I3M) to 4-hydroxy-indol-3-yl-methylglucosinolate (4OH-I3M) and/or 1-hydroxy-indol-3-yl-methylglucosinolate (1OH-I3M) intermediates. These hydroxy intermediates are converted to 4-methoxy-indol-3-yl-methylglucosinolate (4MO-I3M) and 1-methoxy-indol-3-yl-methylglucosinolate (1MO-I3M) by indole glucosinolate methyltransferase 1 and 2 (IGMT1 and IGMT2). The protein is Cytochrome P450 81F1 of Arabidopsis thaliana (Mouse-ear cress).